The sequence spans 321 residues: Probable NAD(P)H-dependent D-xylose reductase xyl1 (321 aa).

The active-site Proton donor is the Y50. A substrate-binding site is contributed by H112. NAD(+) contacts are provided by residues 166–167 (SN), 215–224 (SSFGPLSFVE), and 271–281 (KSNDPTRLAQN).

Belongs to the aldo/keto reductase family.

The catalysed reaction is xylitol + NAD(+) = D-xylose + NADH + H(+). The enzyme catalyses xylitol + NADP(+) = D-xylose + NADPH + H(+). It functions in the pathway carbohydrate metabolism; D-xylose degradation. Its function is as follows. Catalyzes the initial reaction in the xylose utilization pathway by reducing D-xylose into xylitol. Xylose is a major component of hemicelluloses such as xylan. Most fungi utilize D-xylose via three enzymatic reactions, xylose reductase (XR), xylitol dehydrogenase (XDH), and xylulokinase, to form xylulose 5-phosphate, which enters pentose phosphate pathway. This is Probable NAD(P)H-dependent D-xylose reductase xyl1 (xyl1) from Neosartorya fischeri (strain ATCC 1020 / DSM 3700 / CBS 544.65 / FGSC A1164 / JCM 1740 / NRRL 181 / WB 181) (Aspergillus fischerianus).